The sequence spans 186 residues: Casparian strip membrane protein 1 (186 aa).

Residues 1–26 (MKSSPAELISEAKSSTQNSKMKRAVS) lie on the Cytoplasmic side of the membrane. A helical transmembrane segment spans residues 27–47 (VLDFILRLIAVVATLASAIAM). Over 48–74 (GTTDESLPFFTQFIRFRAEYDDLPTLR) the chain is Extracellular. A helical transmembrane segment spans residues 75-95 (LFVVASAFASGYLILSLPLSI). At 96-107 (LHITRSSARRTR) the chain is on the cytoplasmic side. Residues 108 to 128 (VILIILDMVMLTSLTAASSAA) traverse the membrane as a helical segment. Residues 129–161 (AAIVYLAHKGNAKANWFAFCQQYDSFCERISGS) are Extracellular-facing. Residues 162–182 (LIGSFIAIPLFIMLILFSALV) traverse the membrane as a helical segment. At 183-186 (LSKR) the chain is on the cytoplasmic side.

This sequence belongs to the Casparian strip membrane proteins (CASP) family. As to quaternary structure, homodimer and heterodimers.

It localises to the cell membrane. Functionally, regulates membrane-cell wall junctions and localized cell wall deposition. Required for establishment of the Casparian strip membrane domain (CSD) and the subsequent formation of Casparian strips, a cell wall modification of the root endodermis that determines an apoplastic barrier between the intraorganismal apoplasm and the extraorganismal apoplasm and prevents lateral diffusion. The sequence is that of Casparian strip membrane protein 1 from Lotus japonicus (Lotus corniculatus var. japonicus).